The sequence spans 104 residues: Large ribosomal subunit protein uL24 (104 aa).

This sequence belongs to the universal ribosomal protein uL24 family. Part of the 50S ribosomal subunit.

Its function is as follows. One of two assembly initiator proteins, it binds directly to the 5'-end of the 23S rRNA, where it nucleates assembly of the 50S subunit. Functionally, one of the proteins that surrounds the polypeptide exit tunnel on the outside of the subunit. The chain is Large ribosomal subunit protein uL24 from Brevibacillus brevis (strain 47 / JCM 6285 / NBRC 100599).